The chain runs to 115 residues: Transcription initiation factor IIA subunit 2 (115 aa).

The protein belongs to the TFIIA subunit 2 family. As to quaternary structure, TFIIA is a heterodimer of the large unprocessed subunit 1 and a small subunit gamma.

Its subcellular location is the nucleus. Functionally, TFIIA is a component of the transcription machinery of RNA polymerase II and plays an important role in transcriptional activation. TFIIA in a complex with tbp mediates transcriptional activity. The sequence is that of Transcription initiation factor IIA subunit 2 (gtf2a2) from Dictyostelium discoideum (Social amoeba).